The following is a 262-amino-acid chain: Small ribosomal subunit protein mS23 (262 aa).

Residues 211–262 (SGQSDEAPEGEGSDMSAGEYDMAVEELAGQGSIPNTPQSTVVPEGTSAPAHA) are disordered. Polar residues predominate over residues 242-251 (SIPNTPQSTV).

Belongs to the mitochondrion-specific ribosomal protein mS23 family. As to quaternary structure, component of the mitochondrial small ribosomal subunit.

The protein localises to the mitochondrion. The polypeptide is Small ribosomal subunit protein mS23 (RSM25) (Phaeosphaeria nodorum (strain SN15 / ATCC MYA-4574 / FGSC 10173) (Glume blotch fungus)).